The sequence spans 522 residues: WEB family protein At2g38370 (522 aa).

Residues Met1–Phe32 form a disordered region. Coiled-coil stretches lie at residues Glu77–Glu264 and Ala299–Asn376. Disordered stretches follow at residues Ser374 to Glu397 and Met458 to Lys493. Positions Thr473 to Arg486 are enriched in basic and acidic residues.

The protein belongs to the WEB family.

The sequence is that of WEB family protein At2g38370 from Arabidopsis thaliana (Mouse-ear cress).